We begin with the raw amino-acid sequence, 308 residues long: Tetraacyldisaccharide 4'-kinase (308 aa).

Serine 63–threonine 70 is a binding site for ATP.

It belongs to the LpxK family.

The catalysed reaction is a lipid A disaccharide + ATP = a lipid IVA + ADP + H(+). It functions in the pathway glycolipid biosynthesis; lipid IV(A) biosynthesis; lipid IV(A) from (3R)-3-hydroxytetradecanoyl-[acyl-carrier-protein] and UDP-N-acetyl-alpha-D-glucosamine: step 6/6. Transfers the gamma-phosphate of ATP to the 4'-position of a tetraacyldisaccharide 1-phosphate intermediate (termed DS-1-P) to form tetraacyldisaccharide 1,4'-bis-phosphate (lipid IVA). The polypeptide is Tetraacyldisaccharide 4'-kinase (Campylobacter jejuni subsp. jejuni serotype O:23/36 (strain 81-176)).